The chain runs to 417 residues: Tryptophan synthase beta chain (417 aa).

Lysine 99 carries the N6-(pyridoxal phosphate)lysine modification.

Belongs to the TrpB family. As to quaternary structure, tetramer of two alpha and two beta chains. Pyridoxal 5'-phosphate serves as cofactor.

The enzyme catalyses (1S,2R)-1-C-(indol-3-yl)glycerol 3-phosphate + L-serine = D-glyceraldehyde 3-phosphate + L-tryptophan + H2O. It functions in the pathway amino-acid biosynthesis; L-tryptophan biosynthesis; L-tryptophan from chorismate: step 5/5. In terms of biological role, the beta subunit is responsible for the synthesis of L-tryptophan from indole and L-serine. This is Tryptophan synthase beta chain (trpB) from Corynebacterium glutamicum (strain ATCC 13032 / DSM 20300 / JCM 1318 / BCRC 11384 / CCUG 27702 / LMG 3730 / NBRC 12168 / NCIMB 10025 / NRRL B-2784 / 534).